A 210-amino-acid chain; its full sequence is Probable nicotinate-nucleotide adenylyltransferase (210 aa).

The protein belongs to the NadD family.

The enzyme catalyses nicotinate beta-D-ribonucleotide + ATP + H(+) = deamido-NAD(+) + diphosphate. The protein operates within cofactor biosynthesis; NAD(+) biosynthesis; deamido-NAD(+) from nicotinate D-ribonucleotide: step 1/1. In terms of biological role, catalyzes the reversible adenylation of nicotinate mononucleotide (NaMN) to nicotinic acid adenine dinucleotide (NaAD). This chain is Probable nicotinate-nucleotide adenylyltransferase, found in Streptococcus pyogenes serotype M3 (strain ATCC BAA-595 / MGAS315).